The chain runs to 349 residues: MDMENLTWLHGKPTASGILKANPEDFVVVEDLGFEPDGEGEHLLVRIRKNGCNTQFVADYLARFAKLHPRLVSYAGLKDRHAVTEQWFCLHLPGKEAPDLATFELEGCEVLEAVRHKRKLRIGSLKGNAFTLVLRHITDRQDVEQRLQQIAAQGVPNYFGSQRFGRGGNNLVQARLWANNEIRVKERSKRSFYLSASRSAMFNLISSHRLAQQLSTTVLEGDALQLSGRGSWFVAQADELATLQQRVTAGELNITAPLPGDSELGTHGEALAFEQACLAEQTELLSLIKRERVEGSRRAVLLKPQNMISNWWDDVTLELSFWLPAGSFATSVVREIMNQDRADDTDIIE.

Phe26 contributes to the substrate binding site. The active-site Nucleophile is the Asp79. Asn128 contacts substrate. The region spanning 154 to 302 (GVPNYFGSQR…VEGSRRAVLL (149 aa)) is the TRUD domain. Position 328 (Phe328) interacts with substrate.

It belongs to the pseudouridine synthase TruD family.

The enzyme catalyses uridine(13) in tRNA = pseudouridine(13) in tRNA. Its function is as follows. Responsible for synthesis of pseudouridine from uracil-13 in transfer RNAs. The chain is tRNA pseudouridine synthase D from Yersinia pseudotuberculosis serotype O:1b (strain IP 31758).